A 255-amino-acid polypeptide reads, in one-letter code: Cytochrome b561 and DOMON domain-containing protein At5g48750 (255 aa).

Positions 1–27 are cleaved as a signal peptide; it reads MFLSSRTIFVGLCFLFVLAPCFTRATT. The region spanning 54–169 is the DOMON domain; it reads LDSFLHYSYV…TVVNHLWQDG (116 aa). A Cytochrome b561 domain is found at 176 to 255; it reads RLGMHAMSGN…DPTWFYILIL (80 aa). Residues 216–236 form a helical membrane-spanning segment; it reads IHGLVNAVCWGIFIPIGVMAA.

The protein resides in the membrane. In Arabidopsis thaliana (Mouse-ear cress), this protein is Cytochrome b561 and DOMON domain-containing protein At5g48750.